The chain runs to 311 residues: Glycine--tRNA ligase alpha subunit (311 aa).

This sequence belongs to the class-II aminoacyl-tRNA synthetase family. As to quaternary structure, tetramer of two alpha and two beta subunits.

The protein localises to the cytoplasm. The enzyme catalyses tRNA(Gly) + glycine + ATP = glycyl-tRNA(Gly) + AMP + diphosphate. The protein is Glycine--tRNA ligase alpha subunit of Brucella anthropi (strain ATCC 49188 / DSM 6882 / CCUG 24695 / JCM 21032 / LMG 3331 / NBRC 15819 / NCTC 12168 / Alc 37) (Ochrobactrum anthropi).